The sequence spans 206 residues: dITP/XTP pyrophosphatase (206 aa).

Residue 7–12 (SSHGYK) participates in substrate binding. Asp-70 serves as the catalytic Proton acceptor. Asp-70 is a Mg(2+) binding site. Residues Thr-71, 154 to 157 (FGYD), Lys-177, and 182 to 183 (HR) each bind substrate.

The protein belongs to the HAM1 NTPase family. As to quaternary structure, homodimer. The cofactor is Mg(2+).

The catalysed reaction is XTP + H2O = XMP + diphosphate + H(+). The enzyme catalyses dITP + H2O = dIMP + diphosphate + H(+). It catalyses the reaction ITP + H2O = IMP + diphosphate + H(+). Its function is as follows. Pyrophosphatase that catalyzes the hydrolysis of nucleoside triphosphates to their monophosphate derivatives, with a high preference for the non-canonical purine nucleotides XTP (xanthosine triphosphate), dITP (deoxyinosine triphosphate) and ITP. Seems to function as a house-cleaning enzyme that removes non-canonical purine nucleotides from the nucleotide pool, thus preventing their incorporation into DNA/RNA and avoiding chromosomal lesions. This Chlamydia pneumoniae (Chlamydophila pneumoniae) protein is dITP/XTP pyrophosphatase.